Consider the following 281-residue polypeptide: Diphthine methyl ester synthase (281 aa).

S-adenosyl-L-methionine is bound by residues Leu-9, Asp-84, Gly-87, 112-113 (SI), and Leu-163. Ser-171 carries the post-translational modification Phosphoserine. S-adenosyl-L-methionine is bound by residues Val-225 and His-250.

It belongs to the diphthine synthase family.

It carries out the reaction 2-[(3S)-amino-3-carboxypropyl]-L-histidyl-[translation elongation factor 2] + 4 S-adenosyl-L-methionine = diphthine methyl ester-[translation elongation factor 2] + 4 S-adenosyl-L-homocysteine + 3 H(+). The protein operates within protein modification; peptidyl-diphthamide biosynthesis. Its function is as follows. S-adenosyl-L-methionine-dependent methyltransferase that catalyzes four methylations of the modified target histidine residue in translation elongation factor 2 (EF-2), to form an intermediate called diphthine methyl ester. The four successive methylation reactions represent the second step of diphthamide biosynthesis. The polypeptide is Diphthine methyl ester synthase (Dph5) (Mus musculus (Mouse)).